The following is a 165-amino-acid chain: UPF0303 protein Bamb_1459 (165 aa).

The protein belongs to the UPF0303 family.

In Burkholderia ambifaria (strain ATCC BAA-244 / DSM 16087 / CCUG 44356 / LMG 19182 / AMMD) (Burkholderia cepacia (strain AMMD)), this protein is UPF0303 protein Bamb_1459.